The following is a 482-amino-acid chain: tRNA sulfurtransferase (482 aa).

The THUMP domain occupies 61–165; the sequence is LAIRDALTRI…DDRLLLIKGR (105 aa). ATP is bound by residues 183–184, lysine 265, glycine 287, and glutamine 296; that span reads LI. A disulfide bridge connects residues cysteine 344 and cysteine 456. Residues 404–482 enclose the Rhodanese domain; that stretch reads FGPNDVILDI…GFNNVKVYRP (79 aa). Cysteine 456 (cysteine persulfide intermediate) is an active-site residue.

The protein belongs to the ThiI family.

The protein localises to the cytoplasm. It catalyses the reaction [ThiI sulfur-carrier protein]-S-sulfanyl-L-cysteine + a uridine in tRNA + 2 reduced [2Fe-2S]-[ferredoxin] + ATP + H(+) = [ThiI sulfur-carrier protein]-L-cysteine + a 4-thiouridine in tRNA + 2 oxidized [2Fe-2S]-[ferredoxin] + AMP + diphosphate. It carries out the reaction [ThiS sulfur-carrier protein]-C-terminal Gly-Gly-AMP + S-sulfanyl-L-cysteinyl-[cysteine desulfurase] + AH2 = [ThiS sulfur-carrier protein]-C-terminal-Gly-aminoethanethioate + L-cysteinyl-[cysteine desulfurase] + A + AMP + 2 H(+). It participates in cofactor biosynthesis; thiamine diphosphate biosynthesis. Its function is as follows. Catalyzes the ATP-dependent transfer of a sulfur to tRNA to produce 4-thiouridine in position 8 of tRNAs, which functions as a near-UV photosensor. Also catalyzes the transfer of sulfur to the sulfur carrier protein ThiS, forming ThiS-thiocarboxylate. This is a step in the synthesis of thiazole, in the thiamine biosynthesis pathway. The sulfur is donated as persulfide by IscS. The polypeptide is tRNA sulfurtransferase (Escherichia coli O127:H6 (strain E2348/69 / EPEC)).